Consider the following 350-residue polypeptide: Transmembrane protein 185A (350 aa).

Helical transmembrane passes span 16 to 36 (LIYA…DGII), 41 to 61 (WAVF…ASVG), 81 to 101 (FKAM…EVLV), 111 to 131 (FWLL…AACV), 177 to 197 (ILMS…VLFL), 211 to 231 (ITMA…EILL), and 240 to 260 (AFSC…LMAT). The segment at 298-350 (DLHHEDNEETEETPVPEPPKIAPMFRKKARVVITQSPGKYVLPPPKLNIEMPD) is mediates interaction with MAP1B.

Belongs to the TMEM185 family. As to quaternary structure, interacts with MAP1B.

The protein resides in the cell projection. It localises to the dendrite. The protein localises to the membrane. The polypeptide is Transmembrane protein 185A (TMEM185A) (Homo sapiens (Human)).